We begin with the raw amino-acid sequence, 294 residues long: Protease HtpX (294 aa).

A run of 2 helical transmembrane segments spans residues 4-24 (ILLF…ILFI) and 33-53 (FGLI…SLLL). His-139 serves as a coordination point for Zn(2+). The active site involves Glu-140. His-143 provides a ligand contact to Zn(2+). 2 helical membrane passes run 147–167 (GDMI…IFLS) and 197–217 (FFIS…ITFW). Position 223 (Glu-223) interacts with Zn(2+).

The protein belongs to the peptidase M48B family. Zn(2+) serves as cofactor.

It is found in the cell membrane. This chain is Protease HtpX, found in Wigglesworthia glossinidia brevipalpis.